The chain runs to 167 residues: Phosphorelay intermediate protein YPD1 (167 aa).

The HPt domain maps to 24 to 129 (DSDFSKGLII…DDEEIKIQVD (106 aa)). Phosphohistidine is present on His64.

It belongs to the YPD1 family. As to quaternary structure, interacts with the response regulatory domains of SLN1 and SSK1. In terms of processing, the phosphorelay mechanism involves the sequential transfer of a phosphate group from 'His-576' (H1) to 'Asp-1144' (D1) of SLN1, then to His-64 (H2) of YPD1 and finally to 'Asp-554' (D2) of SSK1 or 'Asp-427' (D2) of SKN7.

The protein resides in the cytoplasm. Its subcellular location is the nucleus. Phosphorelay intermediate protein that is part of the branched SLN1-YPD1-SKN7/SSK1 two-component regulatory system, which controls activity of the HOG1 pathway and gene expression in response to changes in the osmolarity of the extracellular environment. Catalyzes the phosphoryl group transfer from the membrane-bound osmosensing histidine kinase SLN1 to two distinct response regulator proteins, SSK1 in the cytoplasm, and transcription factor SKN7 in the nucleus. The protein is Phosphorelay intermediate protein YPD1 (YPD1) of Saccharomyces cerevisiae (strain ATCC 204508 / S288c) (Baker's yeast).